The chain runs to 247 residues: ATP synthase subunit C lysine N-methyltransferase (247 aa).

N-acetylmethionine is present on M1. Basic and acidic residues predominate over residues 1–12 (MERVGTPEEERQ). Positions 1 to 25 (MERVGTPEEERQAGPVLPTSLESDS) are disordered. The chain crosses the membrane as a helical span at residues 34 to 54 (LITGVVGGALLTVYAVATPFI). The interval 51 to 85 (TPFITPALRKVCLPFVPATSKQVENVVRMLRHRRG) is required for mitochondrial location. The tract at residues 209 to 247 (QRGRGGRPNQEWVGQKNLSETAGLQASSSETRSKLLDVE) is disordered. Positions 224–238 (KNLSETAGLQASSSE) are enriched in polar residues.

Belongs to the ANT/ATPSC lysine N-methyltransferase family. Ubiquitously expressed.

The protein resides in the mitochondrion membrane. It carries out the reaction L-lysyl-[protein] + 3 S-adenosyl-L-methionine = N(6),N(6),N(6)-trimethyl-L-lysyl-[protein] + 3 S-adenosyl-L-homocysteine + 3 H(+). Its function is as follows. Mitochondrial protein-lysine N-methyltransferase that trimethylates ATP synthase subunit C, ATP5MC1 and ATP5MC2. Trimethylation is required for proper incorporation of the C subunit into the ATP synthase complex and mitochondrial respiration. Promotes chronic pain. Involved in persistent inflammatory and neuropathic pain: methyltransferase activity in the mitochondria of sensory neurons promotes chronic pain via a pathway that depends on the production of reactive oxygen species (ROS) and on the engagement of spinal cord microglia. The protein is ATP synthase subunit C lysine N-methyltransferase of Mus musculus (Mouse).